Reading from the N-terminus, the 210-residue chain is Probable peroxygenase 7 (210 aa).

The interval 1 to 24 (MSHQTVALASKAKSPKPKRGKLDK) is disordered. The EF-hand domain occupies 25 to 60 (EKMTALEKHVSFFDRNKDGTVYPWETYQGFRALGTG). Residue His-33 participates in heme binding. Ca(2+)-binding residues include Asp-38, Asn-40, Asp-42, Thr-44, and Glu-49. A Proline-knot motif is present at residues 81-90 (PGKGFSPLFP). Ser-188 carries the phosphoserine modification.

The protein belongs to the caleosin family. As to quaternary structure, homodimer. Heme b is required as a cofactor. Requires Ca(2+) as cofactor. In terms of tissue distribution, expressed in pollen coat.

It is found in the secreted. The catalysed reaction is RH + ROOH = ROH + ROH.. In terms of biological role, probable calcium-binding peroxygenase. May be involved in pollination. In Arabidopsis thaliana (Mouse-ear cress), this protein is Probable peroxygenase 7 (PXG7).